Reading from the N-terminus, the 103-residue chain is Large ribosomal subunit protein bL21 (103 aa).

Belongs to the bacterial ribosomal protein bL21 family. Part of the 50S ribosomal subunit. Contacts protein L20.

Its function is as follows. This protein binds to 23S rRNA in the presence of protein L20. This is Large ribosomal subunit protein bL21 from Variovorax paradoxus (strain S110).